A 72-amino-acid polypeptide reads, in one-letter code: DNA-directed RNA polymerase subunit omega (72 aa).

It belongs to the RNA polymerase subunit omega family. As to quaternary structure, the RNAP catalytic core consists of 2 alpha, 1 beta, 1 beta' and 1 omega subunit. When a sigma factor is associated with the core the holoenzyme is formed, which can initiate transcription.

The enzyme catalyses RNA(n) + a ribonucleoside 5'-triphosphate = RNA(n+1) + diphosphate. In terms of biological role, promotes RNA polymerase assembly. Latches the N- and C-terminal regions of the beta' subunit thereby facilitating its interaction with the beta and alpha subunits. The sequence is that of DNA-directed RNA polymerase subunit omega from Laribacter hongkongensis (strain HLHK9).